A 547-amino-acid polypeptide reads, in one-letter code: MDGSRVQLWAKTDPFLLGALQMPPPAKFSMHYLRKMASYVRTRATEGCYPRLYWAMWRHIACGKLQIVEETAWLYFETFLSVFERSVAQSLDWAEVASTCPSSEKYEEIKSQLSVDTLKFILFLYIQQINKISLRAPMIESEWPSPRSRSPTPDFVAQSSIYNKVWDDYSHYNFIHNHLTYILELLMEPKQLSIVTQSSHCILISAEVVNALGFLIEGTVDKNRAVNHFLDLAVWQPVQIKSGFIETSGAFSFQKLQAWIKECLVINPFGITACIKSGTKLSWAQQVDGLNKRAKVACNTYKVPHTHRMVVMSQISKQTLAKSSKTLVDARVKIHRCSDCYIYLLSPLRSVTVEKCQNCTIILGPVQTVLHIQMCYNVKIIAVCQRLSLLSTTNCTFHILTPTRPLFYCGNQGAVLAPFHIRYSMLEDHMAQTGLATVPNSWDRPFLFSTESNNSNIWRLMPPEDFFTFVVPFEMEGDTTEIPGGLPPAYSNSVQQRQQKIHTWQKTVKDAGLTREQRKQFQAVVEMKFNEWLSKTENRHQLDSLVS.

The C-CAP/cofactor C-like domain occupies 304–435; the sequence is PHTHRMVVMS…LEDHMAQTGL (132 aa).

This sequence belongs to the TBCC family.

The protein resides in the cytoplasm. It localises to the cytoskeleton. It is found in the microtubule organizing center. Its subcellular location is the centrosome. The protein localises to the spindle pole. May play a role in the regulation of centrosome and Golgi apparatus positioning. The polypeptide is TBCC domain-containing protein 1 (tbccd1) (Xenopus laevis (African clawed frog)).